Here is a 740-residue protein sequence, read N- to C-terminus: Ion-translocating oxidoreductase complex subunit C (740 aa).

4Fe-4S ferredoxin-type domains follow at residues 369 to 397 (GEPQ…QQLY) and 407 to 436 (KATT…VQYF). 8 residues coordinate [4Fe-4S] cluster: Cys377, Cys380, Cys383, Cys387, Cys416, Cys419, Cys422, and Cys426. 2 disordered regions span residues 602-621 (KLEQ…PRKA) and 660-718 (ARAK…RKAA). Residues 611–621 (KPEEQVDPRKA) are compositionally biased toward basic and acidic residues.

It belongs to the 4Fe4S bacterial-type ferredoxin family. RnfC subfamily. As to quaternary structure, the complex is composed of six subunits: RsxA, RsxB, RsxC, RsxD, RsxE and RsxG. [4Fe-4S] cluster serves as cofactor.

The protein localises to the cell inner membrane. Its function is as follows. Part of a membrane-bound complex that couples electron transfer with translocation of ions across the membrane. Required to maintain the reduced state of SoxR. The sequence is that of Ion-translocating oxidoreductase complex subunit C from Escherichia coli O9:H4 (strain HS).